Here is a 673-residue protein sequence, read N- to C-terminus: Vasorin (673 aa).

A signal peptide spans 1–24 (MHSRSCLPPLLLLLLVLLGSGVQG). Residues 25–53 (CPSGCQCNQPQTVFCTARQGTTVPRDVPP) form the LRRNT domain. Residues 25 to 576 (CPSGCQCNQP…VTQAREGNLP (552 aa)) lie on the Extracellular side of the membrane. 10 LRR repeats span residues 54 to 75 (DTVG…CFAG), 78 to 99 (GLQL…IFQP), 102 to 123 (NLSN…TFRG), 126 to 147 (RLER…AFDA), 150 to 170 (RLLE…LHLP), 171 to 192 (RLLL…ILDT), 194 to 215 (NVEA…LFGR), 218 to 239 (NLHD…IQGL), 241 to 265 (GLTR…AGLT), and 266 to 288 (ALQE…SSLF). N-linked (GlcNAc...) asparagine glycans are attached at residues Asn-102 and Asn-118. N-linked (GlcNAc...) asparagine glycosylation occurs at Asn-274. Residues 299–352 (NPFNCLCPLSWFGPWVRENHVVLASPEETRCHFPPKNAGRLLLDLDYADFGCPV) form the LRRCT domain. Residues 369–389 (PTLSTSSQAPTWPSLTEPTTQ) are disordered. The span at 370–389 (TLSTSSQAPTWPSLTEPTTQ) shows a compositional bias: polar residues. The 38-residue stretch at 406 to 443 (QPQDCPASICLNGGSCRLGARHHWECLCPEGFIGLYCE) folds into the EGF-like domain. Intrachain disulfides connect Cys-410–Cys-421, Cys-415–Cys-431, and Cys-433–Cys-442. Residues 463-559 (PLLPLSIEPV…ACGEANTSQA (97 aa)) enclose the Fibronectin type-III domain. N-linked (GlcNAc...) asparagine glycosylation is found at Asn-501, Asn-529, and Asn-555. Residues 577 to 597 (LLIAPALAAVLLAVLAAAGAA) form a helical membrane-spanning segment. The Cytoplasmic segment spans residues 598–673 (YCVRRARATS…QGVLPAKHYI (76 aa)). Residues 608–648 (TAQDKGQVGPGTGPLELEGVKAPLEPGSKATEGGGEALSGG) are disordered.

In terms of assembly, interacts with TGFB1, TGFB2 and TGFB3. Post-translationally, N-glycosylated.

It localises to the membrane. Its function is as follows. May act as an inhibitor of TGF-beta signaling. The polypeptide is Vasorin (Vasn) (Mus musculus (Mouse)).